A 411-amino-acid chain; its full sequence is Heterogeneous nuclear ribonucleoprotein 1 (411 aa).

Residues 6–82 (GKLFVGGISW…REVDVKRAMS (77 aa)) form the RRM 1 domain. 3 disordered regions span residues 81 to 103 (MSREEQQVSGRTGNLNTSRSSGG), 183 to 221 (KRALPKDANPGGGGRSMGGGGSGGYQGYGGNESSYDGRM), and 358 to 411 (AAYG…RQGQ). Polar residues predominate over residues 87-101 (QVSGRTGNLNTSRSS). Positions 110–187 (KKIFVGGLPP…KQVEVKRALP (78 aa)) constitute an RRM 2 domain. 3 stretches are compositionally biased toward gly residues: residues 192 to 212 (PGGGGRSMGGGGSGGYQGYGG), 362 to 387 (VVGGRPSGGGSNNPGSGGYMGGGYGD), and 397 to 411 (GYGGGYNDGQGRQGQ). Positions 341–390 (GYGYGGYSGSDSGYGNQAAYGVVGGRPSGGGSNNPGSGGYMGGGYGDGSW) are nuclear targeting sequence (M9).

As to quaternary structure, component of the spliceosome. Interacts with TRN1.

It is found in the nucleus. The protein resides in the cytoplasm. Involved with pre-mRNA processing. Forms complexes (ribonucleosomes) with at least 20 other different hnRNP and heterogeneous nuclear RNA in the nucleus. Its function is as follows. Involved in the packaging of pre-mRNA into hnRNP particles, transport of poly(A) mRNA from the nucleus to the cytoplasm and may modulate splice site selection. This Arabidopsis thaliana (Mouse-ear cress) protein is Heterogeneous nuclear ribonucleoprotein 1 (RNP1).